Here is a 248-residue protein sequence, read N- to C-terminus: MKIHVAGFFAGLFGALATLFILLSFGTDYWLLASETCNSHLNSPVTSERGDILVNQVHDPNSEAPNITFHHEGFFWRCTFDDVMNDGNLWKFWFENQPHVRVCKPAYLLPFPFPDQSYNTTSYQTAIIYRGFWSVSMLVGVAAVVAGGFIIICAAPFASHRLYKAGGGLYLISGFFVLVVTAMYVIWIDVLDVISLYTEYQKLNKCADFELNKTYGLSFMFAPVGVFFCFLSGLLFLVIGRTVHHQYN.

The signal sequence occupies residues 1 to 26 (MKIHVAGFFAGLFGALATLFILLSFG). The Extracellular segment spans residues 27-136 (TDYWLLASET…IIYRGFWSVS (110 aa)). N-linked (GlcNAc...) asparagine glycosylation is found at Asn66 and Asn119. The helical transmembrane segment at 137–157 (MLVGVAAVVAGGFIIICAAPF) threads the bilayer. Residues 158 to 167 (ASHRLYKAGG) are Cytoplasmic-facing. The chain crosses the membrane as a helical span at residues 168 to 188 (GLYLISGFFVLVVTAMYVIWI). The Extracellular portion of the chain corresponds to 189–218 (DVLDVISLYTEYQKLNKCADFELNKTYGLS). The N-linked (GlcNAc...) asparagine glycan is linked to Asn212. A helical transmembrane segment spans residues 219–239 (FMFAPVGVFFCFLSGLLFLVI). Residues 240–248 (GRTVHHQYN) lie on the Cytoplasmic side of the membrane.

The protein belongs to the TMEM182 family.

It localises to the cell membrane. Its function is as follows. May negatively regulate myogenesis and skeletal muscle regeneration. The sequence is that of Transmembrane protein 182 (tmem182a) from Danio rerio (Zebrafish).